The primary structure comprises 181 residues: ADP-ribosylation factor 1 (181 aa).

The N-myristoyl glycine moiety is linked to residue Gly2. Positions 3 to 16 (LYVSRLFNRLFQKK) are important for the stable binding to the membranes. GTP contacts are provided by residues 27-32 (AAGKTT), 126-129 (NKQD), and Ala160.

This sequence belongs to the small GTPase superfamily. Arf family. As to quaternary structure, may interact with GTPase RAB5b.

Its subcellular location is the golgi apparatus membrane. It carries out the reaction GTP + H2O = GDP + phosphate + H(+). Its activity is regulated as follows. Alternates between an inactive GDP-bound form and an active GTP-bound form. Intrinsic GTPase activity is almost undetectable in vitro. Activated by a guanine nucleotide-exchange factor (GEF) and inactivated by GTPase-activating protein ARFGAP1. Its function is as follows. Small GTPase involved in protein trafficking between different compartments. Modulates vesicle budding and uncoating within the Golgi complex. In its GTP-bound form, triggers the recruitment of coatomer proteins to the Golgi membrane. The hydrolysis of ARF1-bound GTP, which is mediated by ARFGAPs proteins, is required for dissociation of coat proteins from Golgi membranes and vesicles. Regulates the transport of N-acylated AK2 to the parasitophorous vacuole membrane. May be involved in the activation of lipid kinase PIP5K. This Plasmodium falciparum (isolate 3D7) protein is ADP-ribosylation factor 1.